The following is a 207-amino-acid chain: ATP-dependent Clp protease proteolytic subunit (207 aa).

Residue S112 is the Nucleophile of the active site. H137 is a catalytic residue.

Belongs to the peptidase S14 family. Fourteen ClpP subunits assemble into 2 heptameric rings which stack back to back to give a disk-like structure with a central cavity, resembling the structure of eukaryotic proteasomes.

It is found in the cytoplasm. The enzyme catalyses Hydrolysis of proteins to small peptides in the presence of ATP and magnesium. alpha-casein is the usual test substrate. In the absence of ATP, only oligopeptides shorter than five residues are hydrolyzed (such as succinyl-Leu-Tyr-|-NHMec, and Leu-Tyr-Leu-|-Tyr-Trp, in which cleavage of the -Tyr-|-Leu- and -Tyr-|-Trp bonds also occurs).. In terms of biological role, cleaves peptides in various proteins in a process that requires ATP hydrolysis. Has a chymotrypsin-like activity. Plays a major role in the degradation of misfolded proteins. The polypeptide is ATP-dependent Clp protease proteolytic subunit (Bacteroides fragilis (strain ATCC 25285 / DSM 2151 / CCUG 4856 / JCM 11019 / LMG 10263 / NCTC 9343 / Onslow / VPI 2553 / EN-2)).